Here is a 132-residue protein sequence, read N- to C-terminus: Large ribosomal subunit protein bL21 (132 aa).

The disordered stretch occupies residues 111-132; it reads AAEKPARKPRAKKTNEVTTDGA.

It belongs to the bacterial ribosomal protein bL21 family. As to quaternary structure, part of the 50S ribosomal subunit. Contacts protein L20.

Its function is as follows. This protein binds to 23S rRNA in the presence of protein L20. The sequence is that of Large ribosomal subunit protein bL21 from Dehalococcoides mccartyi (strain CBDB1).